Consider the following 391-residue polypeptide: Formate-dependent phosphoribosylglycinamide formyltransferase (391 aa).

N(1)-(5-phospho-beta-D-ribosyl)glycinamide-binding positions include 20–21 and E80; that span reads EL. ATP-binding positions include R112, K153, 158-163, 193-196, and E201; these read SSGKGQ and EGFI. The ATP-grasp domain maps to 117–306; that stretch reads RLAAETLGLP…EFALHVRAIQ (190 aa). Residues E265 and E277 each coordinate Mg(2+). N(1)-(5-phospho-beta-D-ribosyl)glycinamide-binding positions include D284, K354, and 361-362; that span reads RR.

It belongs to the PurK/PurT family. In terms of assembly, homodimer.

The enzyme catalyses N(1)-(5-phospho-beta-D-ribosyl)glycinamide + formate + ATP = N(2)-formyl-N(1)-(5-phospho-beta-D-ribosyl)glycinamide + ADP + phosphate + H(+). It functions in the pathway purine metabolism; IMP biosynthesis via de novo pathway; N(2)-formyl-N(1)-(5-phospho-D-ribosyl)glycinamide from N(1)-(5-phospho-D-ribosyl)glycinamide (formate route): step 1/1. Involved in the de novo purine biosynthesis. Catalyzes the transfer of formate to 5-phospho-ribosyl-glycinamide (GAR), producing 5-phospho-ribosyl-N-formylglycinamide (FGAR). Formate is provided by PurU via hydrolysis of 10-formyl-tetrahydrofolate. This is Formate-dependent phosphoribosylglycinamide formyltransferase from Shewanella baltica (strain OS185).